Reading from the N-terminus, the 210-residue chain is Uridine kinase (210 aa).

Glycine 12–threonine 19 is an ATP binding site.

It belongs to the uridine kinase family.

Its subcellular location is the cytoplasm. The enzyme catalyses uridine + ATP = UMP + ADP + H(+). It catalyses the reaction cytidine + ATP = CMP + ADP + H(+). It functions in the pathway pyrimidine metabolism; CTP biosynthesis via salvage pathway; CTP from cytidine: step 1/3. It participates in pyrimidine metabolism; UMP biosynthesis via salvage pathway; UMP from uridine: step 1/1. The sequence is that of Uridine kinase from Bacillus pumilus (strain SAFR-032).